A 391-amino-acid chain; its full sequence is Alanine racemase (391 aa).

The active-site Proton acceptor; specific for D-alanine is Lys46. Lys46 is subject to N6-(pyridoxal phosphate)lysine. Position 148 (Arg148) interacts with substrate. Residue Tyr283 is the Proton acceptor; specific for L-alanine of the active site. Met331 serves as a coordination point for substrate.

Belongs to the alanine racemase family. It depends on pyridoxal 5'-phosphate as a cofactor.

It catalyses the reaction L-alanine = D-alanine. It participates in amino-acid biosynthesis; D-alanine biosynthesis; D-alanine from L-alanine: step 1/1. Its function is as follows. Catalyzes the interconversion of L-alanine and D-alanine. May also act on other amino acids. The protein is Alanine racemase (alr) of Streptomyces coelicolor (strain ATCC BAA-471 / A3(2) / M145).